The chain runs to 234 residues: ATP-dependent dethiobiotin synthetase BioD (234 aa).

ATP is bound at residue 12–17 (DVGKTF). Thr-16 contacts Mg(2+). Lys-37 is an active-site residue. Residue Ser-41 coordinates substrate. ATP contacts are provided by residues Asp-52, 118–121 (EGAG), and 178–179 (SQ). Asp-52 and Glu-118 together coordinate Mg(2+).

Belongs to the dethiobiotin synthetase family. Homodimer. The cofactor is Mg(2+).

The protein localises to the cytoplasm. It catalyses the reaction (7R,8S)-7,8-diammoniononanoate + CO2 + ATP = (4R,5S)-dethiobiotin + ADP + phosphate + 3 H(+). It functions in the pathway cofactor biosynthesis; biotin biosynthesis; biotin from 7,8-diaminononanoate: step 1/2. Functionally, catalyzes a mechanistically unusual reaction, the ATP-dependent insertion of CO2 between the N7 and N8 nitrogen atoms of 7,8-diaminopelargonic acid (DAPA, also called 7,8-diammoniononanoate) to form a ureido ring. The chain is ATP-dependent dethiobiotin synthetase BioD from Phenylobacterium zucineum (strain HLK1).